The sequence spans 527 residues: Putative ABC transporter peptide-binding protein BMEII0859 (527 aa).

Positions 1–23 (MRLRNFYSALALSAAVFAGPLYA) are cleaved as a signal peptide.

The protein belongs to the bacterial solute-binding protein 5 family. The complex is composed of two ATP-binding proteins (BMEII0863 and BMEII0864), two transmembrane proteins (BMEII0860 and BMEII0861) and a solute-binding protein (BMEII0859).

Its subcellular location is the periplasm. In terms of biological role, probably part of an ABC transporter complex that could be involved in peptide import. The polypeptide is Putative ABC transporter peptide-binding protein BMEII0859 (Brucella melitensis biotype 1 (strain ATCC 23456 / CCUG 17765 / NCTC 10094 / 16M)).